A 400-amino-acid chain; its full sequence is uncharacterized protein (400 aa).

Residues 112–126 (SESTAQIEKKPRKPL) show a composition bias toward basic and acidic residues. The segment at 112–151 (SESTAQIEKKPRKPLDSVGLLEGDRNKRKKSPQMNDFNIK) is disordered.

This is an uncharacterized protein from Homo sapiens (Human).